Reading from the N-terminus, the 101-residue chain is Ubiquitin-related modifier 1 (101 aa).

Position 101 is a 1-thioglycine (G101). A Glycyl lysine isopeptide (Gly-Lys) (interchain with K-? in acceptor proteins) cross-link involves residue G101.

The protein belongs to the URM1 family. As to quaternary structure, component of a complex at least composed of URM1, CTU2/NCS2 and CTU1/ATPBD3. In terms of processing, C-terminal thiocarboxylation occurs in 2 steps, it is first acyl-adenylated (-COAMP) via the hesA/moeB/thiF part of MOCS3, then thiocarboxylated (-COSH) via the rhodanese domain of MOCS3.

It is found in the cytoplasm. Its pathway is tRNA modification; 5-methoxycarbonylmethyl-2-thiouridine-tRNA biosynthesis. In terms of biological role, acts as a sulfur carrier required for 2-thiolation of mcm(5)S(2)U at tRNA wobble positions of cytosolic tRNA(Lys), tRNA(Glu) and tRNA(Gln). Serves as sulfur donor in tRNA 2-thiolation reaction by being thiocarboxylated (-COSH) at its C-terminus by MOCS3. The sulfur is then transferred to tRNA to form 2-thiolation of mcm(5)S(2)U. Also acts as a ubiquitin-like protein (UBL) that is covalently conjugated via an isopeptide bond to lysine residues of target proteins such as MOCS3, ATPBD3, CTU2, USP15 and CAS. The thiocarboxylated form serves as substrate for conjugation and oxidative stress specifically induces the formation of UBL-protein conjugates. The chain is Ubiquitin-related modifier 1 from Homo sapiens (Human).